The sequence spans 133 residues: Putative dispanin subfamily A member 2d (133 aa).

At 1–57 (MNHTVQTFFSPVNSGQPPNYEMLKEEHKVAVLGVPHNPAPPTSTVIHIRSKTSVPHH) the chain is on the extracellular side. Lys24 participates in a covalent cross-link: Glycyl lysine isopeptide (Lys-Gly) (interchain with G-Cter in ubiquitin). The helical transmembrane segment at 58–78 (VVWSLFNTLFMNPCCLGFIAF) threads the bilayer. The Cytoplasmic portion of the chain corresponds to 79–107 (AYSVKSRDRKMVGNVTGAQAYASTTKCLN). Residues Lys83, Lys88, and Lys104 each participate in a glycyl lysine isopeptide (Lys-Gly) (interchain with G-Cter in ubiquitin) cross-link. Residues 108–128 (IWALILGILMTILLIIIPVLI) traverse the membrane as a helical segment. Topologically, residues 129 to 133 (FQAHR) are extracellular.

Belongs to the CD225/Dispanin family.

It localises to the membrane. The sequence is that of Putative dispanin subfamily A member 2d from Homo sapiens (Human).